The primary structure comprises 375 residues: Succinyl-diaminopimelate desuccinylase (375 aa).

H66 contacts Zn(2+). D68 is an active-site residue. Residue D99 coordinates Zn(2+). E133 acts as the Proton acceptor in catalysis. Residues E134, E162, and H348 each coordinate Zn(2+).

It belongs to the peptidase M20A family. DapE subfamily. As to quaternary structure, homodimer. Zn(2+) serves as cofactor. Requires Co(2+) as cofactor.

The enzyme catalyses N-succinyl-(2S,6S)-2,6-diaminopimelate + H2O = (2S,6S)-2,6-diaminopimelate + succinate. It functions in the pathway amino-acid biosynthesis; L-lysine biosynthesis via DAP pathway; LL-2,6-diaminopimelate from (S)-tetrahydrodipicolinate (succinylase route): step 3/3. Functionally, catalyzes the hydrolysis of N-succinyl-L,L-diaminopimelic acid (SDAP), forming succinate and LL-2,6-diaminopimelate (DAP), an intermediate involved in the bacterial biosynthesis of lysine and meso-diaminopimelic acid, an essential component of bacterial cell walls. In Serratia proteamaculans (strain 568), this protein is Succinyl-diaminopimelate desuccinylase.